A 209-amino-acid polypeptide reads, in one-letter code: Thymidylate kinase (209 aa).

10-17 contacts ATP; the sequence is GPDGAGKT.

Belongs to the thymidylate kinase family.

The enzyme catalyses dTMP + ATP = dTDP + ADP. In terms of biological role, phosphorylation of dTMP to form dTDP in both de novo and salvage pathways of dTTP synthesis. In Pediococcus pentosaceus (strain ATCC 25745 / CCUG 21536 / LMG 10740 / 183-1w), this protein is Thymidylate kinase.